A 145-amino-acid polypeptide reads, in one-letter code: D-aminoacyl-tRNA deacylase (145 aa).

The short motif at 137–138 is the Gly-cisPro motif, important for rejection of L-amino acids element; it reads GP.

Belongs to the DTD family. As to quaternary structure, homodimer.

Its subcellular location is the cytoplasm. The enzyme catalyses glycyl-tRNA(Ala) + H2O = tRNA(Ala) + glycine + H(+). It carries out the reaction a D-aminoacyl-tRNA + H2O = a tRNA + a D-alpha-amino acid + H(+). Its function is as follows. An aminoacyl-tRNA editing enzyme that deacylates mischarged D-aminoacyl-tRNAs. Also deacylates mischarged glycyl-tRNA(Ala), protecting cells against glycine mischarging by AlaRS. Acts via tRNA-based rather than protein-based catalysis; rejects L-amino acids rather than detecting D-amino acids in the active site. By recycling D-aminoacyl-tRNA to D-amino acids and free tRNA molecules, this enzyme counteracts the toxicity associated with the formation of D-aminoacyl-tRNA entities in vivo and helps enforce protein L-homochirality. This is D-aminoacyl-tRNA deacylase from Salmonella paratyphi A (strain AKU_12601).